A 261-amino-acid polypeptide reads, in one-letter code: uncharacterized protein (261 aa).

Positions 1 to 22 (MKSIKRIGLCISLLILIIFVTS) are cleaved as a signal peptide. The N-palmitoyl cysteine moiety is linked to residue Cys23. A lipid anchor (S-diacylglycerol cysteine) is attached at Cys23.

This sequence belongs to the staphylococcal tandem lipoprotein family.

It localises to the cell membrane. This is an uncharacterized protein from Staphylococcus aureus (strain USA300).